A 593-amino-acid chain; its full sequence is A-type ATP synthase subunit A (593 aa).

236-243 (GPFGSGKT) contributes to the ATP binding site.

It belongs to the ATPase alpha/beta chains family. As to quaternary structure, has multiple subunits with at least A(3), B(3), C, D, E, F, H, I and proteolipid K(x).

Its subcellular location is the cell membrane. The catalysed reaction is ATP + H2O + 4 H(+)(in) = ADP + phosphate + 5 H(+)(out). Component of the A-type ATP synthase that produces ATP from ADP in the presence of a proton gradient across the membrane. The A chain is the catalytic subunit. This Pyrobaculum arsenaticum (strain DSM 13514 / JCM 11321 / PZ6) protein is A-type ATP synthase subunit A.